Consider the following 435-residue polypeptide: Serine hydroxymethyltransferase 2 (435 aa).

Residues leucine 135 and 139–141 contribute to the (6S)-5,6,7,8-tetrahydrofolate site; that span reads GHL. The residue at position 244 (lysine 244) is an N6-(pyridoxal phosphate)lysine. Residue glutamate 260 participates in (6S)-5,6,7,8-tetrahydrofolate binding.

The protein belongs to the SHMT family. Homodimer. Requires pyridoxal 5'-phosphate as cofactor.

The protein localises to the cytoplasm. It catalyses the reaction (6R)-5,10-methylene-5,6,7,8-tetrahydrofolate + glycine + H2O = (6S)-5,6,7,8-tetrahydrofolate + L-serine. Its pathway is one-carbon metabolism; tetrahydrofolate interconversion. It functions in the pathway amino-acid biosynthesis; glycine biosynthesis; glycine from L-serine: step 1/1. Functionally, catalyzes the reversible interconversion of serine and glycine with tetrahydrofolate (THF) serving as the one-carbon carrier. This reaction serves as the major source of one-carbon groups required for the biosynthesis of purines, thymidylate, methionine, and other important biomolecules. Also exhibits THF-independent aldolase activity toward beta-hydroxyamino acids, producing glycine and aldehydes, via a retro-aldol mechanism. The chain is Serine hydroxymethyltransferase 2 from Vibrio cholerae serotype O1 (strain ATCC 39315 / El Tor Inaba N16961).